A 415-amino-acid chain; its full sequence is MRSNSIFTKEIDSEAVKKSSNLRPPSTGSSNSNGSDTASPKKKKKGFFRSLFGSSSSGSKSCGSPFTRIWLEYFEVSLRKNDVDHFRPGYWILDTNIDFFYEIMLRQVLLKRPKEESQQIYLLRPAMVFFLAQAPNPLEIESALPPAMFDASFIFLPINDTNECGIESGSHWSLLVVSVEKGLGWYYDSMSNGNTNDCNLAIKNLGILLKKEFRVRHMKTPQQINDCDCGLHVCENTRILMYRLLQKPYVPKVDMNLDHSVVDSVRLRKALMEVITSLLAAYGSKVPKPSETHTDPEKDKKIFSKICKTEELLELPTLSAVTSDSAQPHSLPASMPSSQPQSRSESLPLTHPNSEPNPKLDSQPNSSPVRRPSLIKVKTASTSVLPTSILQRPPSIVPRPETAAIQHTQQSIEIH.

The interval 1-42 (MRSNSIFTKEIDSEAVKKSSNLRPPSTGSSNSNGSDTASPKK) is disordered. Positions 26-38 (STGSSNSNGSDTA) are enriched in low complexity. A Phosphoserine modification is found at serine 35. Residues histidine 171, aspartate 188, and cysteine 229 contribute to the active site. The interval 320–415 (AVTSDSAQPH…QHTQQSIEIH (96 aa)) is disordered. Polar residues-rich tracts occupy residues 335–368 (MPSS…NSSP), 379–390 (TASTSVLPTSIL), and 405–415 (IQHTQQSIEIH). Phosphoserine is present on serine 367.

This sequence belongs to the peptidase C48 family.

It localises to the cytoplasm. Its subcellular location is the nucleus. Functionally, protease that catalyzes two essential functions in the NEDD8 pathway: processing of full-length NEDD8 to its mature form and deconjugation of NEDD8 from targeted proteins such as the pcu1, pcu2 and pcu4 cullins and other proteins. Has a role in meiosis. The protein is NEDD8-specific protease 2 (nep2) of Schizosaccharomyces pombe (strain 972 / ATCC 24843) (Fission yeast).